We begin with the raw amino-acid sequence, 307 residues long: Protein ORANGE, chloroplastic (307 aa).

Residues 1-55 (MSSLGRILSVSYPPDPYTWRFSQYKLSSSLGRNRRLRWRFTALDPESSSLDSESS) constitute a chloroplast transit peptide. Residue Lys-58 forms a Glycyl lysine isopeptide (Lys-Gly) (interchain with G-Cter in ubiquitin) linkage. 2 helical membrane passes run 146–166 (VYYATCFSLIAGIILFGGLLA) and 199–219 (IVASFSGGAVGVISALMVVEV). The tract at residues 208–299 (VGVISALMVV…CTGMAMASEH (92 aa)) is CR-type-like. The CXXCXGXG motif repeat unit spans residues 230–237 (CKYCLGTG). The CXXCXXXG motif repeat unit spans residues 241–248 (CARCSSTG). Residues 274–281 (CSNCSGAG) form a CXXCXGXG motif repeat. Residues 285–292 (CPTCLCTG) form a CXXCXXXG motif repeat.

It belongs to the orange-like family. In terms of assembly, interacts with the phytoene synthase PSY1 in chloroplast. Binds to the eukaryotic release factor eRF1-2. Interacts with the transcription factor TCP14 in the nucleus to repress chloroplast biogenesis in etiolated seedlings. Associates to the E2 ubiquitin-conjugating enzyme UBC19. In terms of processing, ubiquitination at K-58 by UBC19 is essential for nuclear localization.

Its subcellular location is the plastid. It is found in the chloroplast membrane. The protein resides in the nucleus. The protein localises to the cytoplasm. In terms of biological role, involved in chromoplast differentiation. Associated with a cellular process that triggers the differentiation of pro-plastids or other non-colored plastids into chromoplasts for carotenoid accumulation. Is associated with carotenoid accumulation in chromoplasts. Functions as a major regulator of the phytoene synthase PSY1 protein level and activity. Modulates carotenoid biosynthesis by means of post-transcriptional regulation of PSY1. Modulates carotenoid biosynthesis in part by up-regulating a series of endogenous carotenogenic genes. Regulates cell elongation in the petiole in an eRF1-2-dependent manner. Binds to and represses TCP14 transactivation activity, thus preventing early light-induced proteins (ELIPs, e.g. ELIP1 and ELIP2) expression and delaying chloroplast biogenesis (e.g. lower chlorophyll biosynthesis and slower development of thylakoid membranes) in germinating cotyledons and etiolated seedlings; reduced levels upon illumination combined to TCP14 accumulation derepress chloroplast biogenesis during deetiolation. This Arabidopsis thaliana (Mouse-ear cress) protein is Protein ORANGE, chloroplastic.